A 122-amino-acid polypeptide reads, in one-letter code: UPF0482 protein Spro_2288 (122 aa).

An N-terminal signal peptide occupies residues 1 to 31 (MKTLSTQRLLRGMLPVAMLMLMGAWQAPALA). Positions 46 to 71 (SNSGAMSTEAARQSKQQFNDTKSLRN) are disordered.

The protein belongs to the UPF0482 family.

In Serratia proteamaculans (strain 568), this protein is UPF0482 protein Spro_2288.